Reading from the N-terminus, the 241-residue chain is DnaJ homolog subfamily C member 4 (241 aa).

One can recognise a J domain in the interval 34 to 99; that stretch reads TYYELLGVHP…QSRRSYDDQL (66 aa). Residues 88-99 are compositionally biased toward basic and acidic residues; it reads REQSRRSYDDQL. The tract at residues 88-129 is disordered; that stretch reads REQSRRSYDDQLRSGSPPKSPRTTVHDKSAHQTHSSWTPPNA. The span at 119–129 shows a compositional bias: polar residues; the sequence is QTHSSWTPPNA. Residues 156–175 traverse the membrane as a helical segment; sequence VLGYCLLLMLAGMGLHYIAF. The segment at 212–241 is disordered; the sequence is QQERQRLGQRQPPPSEPTQGPEIVPRGAGP.

It is found in the membrane. This is DnaJ homolog subfamily C member 4 (DNAJC4) from Homo sapiens (Human).